A 67-amino-acid polypeptide reads, in one-letter code: Mitotic-spindle organizing protein 1A (67 aa).

This sequence belongs to the MOZART1 family. As to quaternary structure, part of the gamma-tubulin complex. Interacts with GIP1 and GCP3. As to expression, mostly expressed in siliques and flowers, and, to a lower extent, in leaves, roots and seedlings, with highest levels in young tissues, meristematic cells, and the vasculature.

The protein localises to the cytoplasm. Its subcellular location is the cytoskeleton. It localises to the microtubule organizing center. It is found in the spindle. The protein resides in the nucleus. The protein localises to the phragmoplast. Its subcellular location is the nucleus envelope. Functionally, required for gamma-tubulin complex recruitment to the microtubule organizing centers (MTOCs). During mitosis, modulates gamma-tubulin complex localization, spindle stability and chromosomal segregation. Necessary for gametophyte development and embryogenesis. The chain is Mitotic-spindle organizing protein 1A (GIP2) from Arabidopsis thaliana (Mouse-ear cress).